Consider the following 224-residue polypeptide: UPF0758 protein PM1152 (224 aa).

An MPN domain is found at 102–224 (AFKNSENVRF…YYSFAENRLL (123 aa)). His173, His175, and Asp186 together coordinate Zn(2+). A JAMM motif motif is present at residues 173–186 (HNHPSGNPEPSASD).

The protein belongs to the UPF0758 family.

This Pasteurella multocida (strain Pm70) protein is UPF0758 protein PM1152.